A 305-amino-acid polypeptide reads, in one-letter code: Ribonuclease BN (305 aa).

Residues H64, H66, D68, H69, H141, D212, and H270 each coordinate Zn(2+). D68 functions as the Proton acceptor in the catalytic mechanism.

The protein belongs to the RNase Z family. RNase BN subfamily. As to quaternary structure, homodimer. Requires Zn(2+) as cofactor.

In terms of biological role, zinc phosphodiesterase, which has both exoribonuclease and endoribonuclease activities. This is Ribonuclease BN from Escherichia coli O45:K1 (strain S88 / ExPEC).